We begin with the raw amino-acid sequence, 466 residues long: Adenosylhomocysteinase (466 aa).

3 residues coordinate substrate: threonine 57, aspartate 132, and glutamate 192. 193 to 195 contacts NAD(+); the sequence is TTT. Substrate-binding residues include lysine 222 and aspartate 226. NAD(+) is bound by residues asparagine 227, 256-261, glutamate 279, asparagine 314, 335-337, and asparagine 380; these read GYGDVG and IGH.

The protein belongs to the adenosylhomocysteinase family. The cofactor is NAD(+).

Its subcellular location is the cytoplasm. It catalyses the reaction S-adenosyl-L-homocysteine + H2O = L-homocysteine + adenosine. Its pathway is amino-acid biosynthesis; L-homocysteine biosynthesis; L-homocysteine from S-adenosyl-L-homocysteine: step 1/1. Its function is as follows. May play a key role in the regulation of the intracellular concentration of adenosylhomocysteine. This is Adenosylhomocysteinase from Brucella abortus (strain S19).